The primary structure comprises 98 residues: NADH-ubiquinone oxidoreductase chain 4L (98 aa).

3 helical membrane-spanning segments follow: residues 1–21 (MPIIYMNIMLAFLISLLGMLF), 29–49 (SLLCLEGMMLSLFIMSTLMAL), and 58–78 (IVPIALLVFAACEAAVGLALL).

It belongs to the complex I subunit 4L family. Core subunit of respiratory chain NADH dehydrogenase (Complex I) which is composed of 45 different subunits.

It is found in the mitochondrion inner membrane. It carries out the reaction a ubiquinone + NADH + 5 H(+)(in) = a ubiquinol + NAD(+) + 4 H(+)(out). Functionally, core subunit of the mitochondrial membrane respiratory chain NADH dehydrogenase (Complex I) which catalyzes electron transfer from NADH through the respiratory chain, using ubiquinone as an electron acceptor. Part of the enzyme membrane arm which is embedded in the lipid bilayer and involved in proton translocation. This Trachypithecus obscurus (Dusky leaf-monkey) protein is NADH-ubiquinone oxidoreductase chain 4L (MT-ND4L).